The sequence spans 148 residues: Hemoglobin subunit beta-B (148 aa).

Residues 3–148 enclose the Globin domain; it reads DWTDAERAAI…VVSALGRQYH (146 aa). Heme b contacts are provided by H64 and H93.

It belongs to the globin family. In terms of assembly, heterotetramer of two alpha chains and two beta chains. Red blood cells.

Involved in oxygen transport from gills to the various peripheral tissues. In Seriola quinqueradiata (Five-ray yellowtail), this protein is Hemoglobin subunit beta-B (hbb2).